Reading from the N-terminus, the 520-residue chain is Nucleobase-ascorbate transporter 1 (520 aa).

The next 12 helical transmembrane spans lie at Y36–G56, V64–T84, L86–D106, A129–F149, S150–F170, F174–L194, F213–G233, F279–A299, G362–V382, I384–L404, L415–Y435, and A453–M473.

It belongs to the nucleobase:cation symporter-2 (NCS2) (TC 2.A.40) family. Expressed in cotyledons 4 days after imbibition (DAI). Expressed in the minor and major veins of cotyledons and leaves, in the shoot apex and pedicels. Expressed in the root meristems, root tips and lateral root primordia.

It localises to the membrane. This Arabidopsis thaliana (Mouse-ear cress) protein is Nucleobase-ascorbate transporter 1 (NAT1).